Consider the following 678-residue polypeptide: MELRSYQWEVIMPALEGKNIIIWLPTGAGKTRAAAYVAKRHLETVDGAKVVVLVNRVHLVTQHGEEFRRMLDGRWTVTTLSGDMGPRAGFGHLARCHDLLICTAELLQMALTSPEEEEHVELTVFSLIVVDECHHTHKDTVYNVIMSQYLELKLQRAQPLPQVLGLTASPGTGGASKLDGAINHVLQLCANLDTWCIMSPQNCCPQLQEHSQQPCKQYNLCHRRSQDPFGDLLKKLMDQIHDHLEMPELSRKFGTQMYEQQVVKLSEAAALAGLQEQRVYALHLRRYNDALLIHDTVRAVDALAALQDFYHREHVTKTQILCAERRLLALFDDRKNELAHLATHGPENPKLEMLEKILQRQFSSSNSPRGIIFTRTRQSAHSLLLWLQQQQGLQTVDIRAQLLIGAGNSSQSTHMTQRDQQEVIQKFQDGTLNLLVATSVAEEGLDIPHCNVVVRYGLLTNEISMVQARGRARADQSVYAFVATEGSRELKRELINEALETLMEQAVAAVQKMDQAEYQAKIRDLQQAALTKRAAQAAQRENQRQQFPVEHVQLLCINCMVAVGHGSDLRKVEGTHHVNVNPNFSNYYNVSRDPVVINKVFKDWKPGGVISCRNCGEVWGLQMIYKSVKLPVLKVRSMLLETPQGRIQAKKWSRVPFSVPDFDFLQHCAENLSDLSLD.

In terms of domain architecture, Helicase ATP-binding spans 11–188 (IMPALEGKNI…DGAINHVLQL (178 aa)). Position 24–31 (24–31 (LPTGAGKT)) interacts with ATP. Positions 131 to 134 (DECH) match the DECH box motif. One can recognise a Helicase C-terminal domain in the interval 350–514 (KLEMLEKILQ…QAVAAVQKMD (165 aa)). A coiled-coil region spans residues 489-546 (ELKRELINEALETLMEQAVAAVQKMDQAEYQAKIRDLQQAALTKRAAQAAQRENQRQQ). Residues 539–669 (QRENQRQQFP…PDFDFLQHCA (131 aa)) enclose the RLR CTR domain. The Zn(2+) site is built by Cys556, Cys559, Cys612, and Cys615. The tract at residues 572 to 655 (VEGTHHVNVN…RIQAKKWSRV (84 aa)) is RNA-binding.

It belongs to the helicase family. RLR subfamily. In terms of assembly, monomer in the absence of dsRNA. Homodimer in the presence of dsRNA. Interacts with RIGI (via CARD domain), MAVS/IPS1 and DDX60. Found in a complex with RIGI and IFIH1/MDA5. Interacts with ANKRD17. Directly interacts with ATG5 and ATG12, either as ATG5 and ATG12 monomers or as ATG12-ATG5 conjugates. (Microbial infection) Interacts (via helicase C-terminal domain) with non-structural protein V of paramyxoviruses including human parainfluenza 2 virus, human parainfluenza 5 virus, measles virus, mumps virus, hendra virus and nipah virus. In terms of tissue distribution, expressed in testis, nerve and spleen. Also expressed in the brain.

Its subcellular location is the cytoplasm. The enzyme catalyses ATP + H2O = ADP + phosphate + H(+). Functionally, acts as a regulator of RIGI and IFIH1/MDA5 mediated antiviral signaling. Cannot initiate antiviral signaling as it lacks the CARD domain required for activating MAVS/IPS1-dependent signaling events. Can have both negative and positive regulatory functions related to RIGI and IFIH1/MDA5 signaling and this role in regulating signaling may be complex and could probably depend on characteristics of the infecting virus or target cells, or both. Its inhibitory action on RIG-I signaling may involve the following mechanisms: competition with RIGI for binding to the viral RNA, binding to RIGI and inhibiting its dimerization and interaction with MAVS/IPS1, competing with IKBKE in its binding to MAVS/IPS1 thereby inhibiting activation of interferon regulatory factor 3 (IRF3). Its positive regulatory role may involve unwinding or stripping nucleoproteins of viral RNA thereby facilitating their recognition by RIGI and IFIH1/MDA5. Involved in the innate immune response to various RNA viruses and some DNA viruses such as poxviruses and coronavirus SARS-CoV-2, and also to the bacterial pathogen Listeria monocytogenes. Can bind both ssRNA and dsRNA, with a higher affinity for dsRNA. Shows a preference to 5'-triphosphorylated RNA, although it can recognize RNA lacking a 5'-triphosphate. The sequence is that of ATP-dependent RNA helicase DHX58 from Homo sapiens (Human).